A 510-amino-acid polypeptide reads, in one-letter code: D-alanine--D-alanyl carrier protein ligase (510 aa).

157–158 provides a ligand contact to ATP; it reads TS. Asp-202 contacts D-alanine. An ATP-binding site is contributed by 297-302; the sequence is NTYGPT. Val-306 serves as a coordination point for D-alanine. ATP is bound by residues Asp-389 and Lys-498. Lys-498 provides a ligand contact to D-alanine.

This sequence belongs to the ATP-dependent AMP-binding enzyme family. DltA subfamily.

The protein resides in the cytoplasm. The catalysed reaction is holo-[D-alanyl-carrier protein] + D-alanine + ATP = D-alanyl-[D-alanyl-carrier protein] + AMP + diphosphate. Its pathway is cell wall biogenesis; lipoteichoic acid biosynthesis. Functionally, catalyzes the first step in the D-alanylation of lipoteichoic acid (LTA), the activation of D-alanine and its transfer onto the D-alanyl carrier protein (Dcp) DltC. In an ATP-dependent two-step reaction, forms a high energy D-alanyl-AMP intermediate, followed by transfer of the D-alanyl residue as a thiol ester to the phosphopantheinyl prosthetic group of the Dcp. D-alanylation of LTA plays an important role in modulating the properties of the cell wall in Gram-positive bacteria, influencing the net charge of the cell wall. The protein is D-alanine--D-alanyl carrier protein ligase of Listeria monocytogenes serotype 4a (strain HCC23).